Consider the following 189-residue polypeptide: Probable nicotinate-nucleotide adenylyltransferase (189 aa).

The protein belongs to the NadD family.

It carries out the reaction nicotinate beta-D-ribonucleotide + ATP + H(+) = deamido-NAD(+) + diphosphate. It participates in cofactor biosynthesis; NAD(+) biosynthesis; deamido-NAD(+) from nicotinate D-ribonucleotide: step 1/1. Functionally, catalyzes the reversible adenylation of nicotinate mononucleotide (NaMN) to nicotinic acid adenine dinucleotide (NaAD). The chain is Probable nicotinate-nucleotide adenylyltransferase from Bacillus cereus (strain G9842).